The sequence spans 273 residues: 4-hydroxy-tetrahydrodipicolinate reductase (273 aa).

NAD(+) is bound by residues 12–17 and Glu-38; that span reads GAGGRM. Position 39 (Arg-39) interacts with NADP(+). NAD(+) contacts are provided by residues 102 to 104 and 126 to 129; these read GTT and AANF. His-159 acts as the Proton donor/acceptor in catalysis. Position 160 (His-160) interacts with (S)-2,3,4,5-tetrahydrodipicolinate. The active-site Proton donor is Lys-163. 169–170 serves as a coordination point for (S)-2,3,4,5-tetrahydrodipicolinate; sequence GT.

This sequence belongs to the DapB family. In terms of assembly, homotetramer.

The protein resides in the cytoplasm. The enzyme catalyses (S)-2,3,4,5-tetrahydrodipicolinate + NAD(+) + H2O = (2S,4S)-4-hydroxy-2,3,4,5-tetrahydrodipicolinate + NADH + H(+). It catalyses the reaction (S)-2,3,4,5-tetrahydrodipicolinate + NADP(+) + H2O = (2S,4S)-4-hydroxy-2,3,4,5-tetrahydrodipicolinate + NADPH + H(+). It participates in amino-acid biosynthesis; L-lysine biosynthesis via DAP pathway; (S)-tetrahydrodipicolinate from L-aspartate: step 4/4. Its function is as follows. Catalyzes the conversion of 4-hydroxy-tetrahydrodipicolinate (HTPA) to tetrahydrodipicolinate. This is 4-hydroxy-tetrahydrodipicolinate reductase from Salmonella enteritidis PT4 (strain P125109).